Consider the following 946-residue polypeptide: Villin-4 (946 aa).

Gelsolin-like repeat units follow at residues 28 to 109, 152 to 219, 274 to 339, and 641 to 715; these read NFKP…ETEK, VHVK…EDGK, LEHE…TIMF, and EIHH…PQFF. Disordered regions lie at residues 744–789, 801–832, and 844–902; these read ATPS…GRSP, PSTR…SSKQ, and GPTK…PAPD. A compositionally biased stretch (polar residues) spans 765–777; it reads QDKSQQRTRSMSH. Over residues 874–883 the composition is skewed to acidic residues; that stretch reads SENEPEDDEN. An HP domain is found at 881–946; sequence DENSTIYPYE…NRLKSDLQLF (66 aa).

This sequence belongs to the villin/gelsolin family.

The protein resides in the cytoplasm. Its subcellular location is the cytoskeleton. Ca(2+)-regulated actin-binding protein. Binds actin microfilaments (MFs). Involved in actin filament bundling, severing and capping. Caps the barbed end of actin filaments and is able to sever them in a calcium-dependent manner. This chain is Villin-4, found in Oryza sativa subsp. japonica (Rice).